The primary structure comprises 231 residues: MQGQEDGDSILPFAKCSRVVSRFSPCSLPPQNRRPMPQPYGDAFWENLSQRSSSNWMVEQYIPPILRATDCSRPSLHPLEGLPPPEKLWRRKRKKLHLERMQKGPGSIPARVRAVTYHLEDLRRRQGIINELKRAQWGSSDATPELPALEEGFELLSTTKYFDVEEERATYPQKETYSVTPRDQLLWTPWTPVGQQGTYASGQLSSLTYSTATARKNPVYDPQAMELESEE.

An interaction with CCNA1 and CCNA1/CDK2 complex; essential for CDK2 inhibitory activity region spans residues 75 to 99 (SLHPLEGLPPPEKLWRRKRKKLHLE). The short motif at 90–95 (RRKRKK) is the Nuclear localization signal element. The residue at position 180 (Thr-180) is a Phosphothreonine.

It belongs to the INCA family. Interacts with CCNA1. Identified in a complex with CCNA1 and CDK2. Interacts with ZNF16; the interaction inhibits INCA1 activity and induces the cell cycle process. Interacts with SPACA9. Interacts with CCNA2, CCNB1 and CCNE1. Interacts with the CCNA1/CDK2 complex. Interacts with ING5, DAZAP2, RNF26, USP15, SPOUT1, DPH7, TRIM26 and RAB5C. Post-translationally, phosphorylated when part of a complex with CCNA1 and CDK2.

The protein localises to the nucleus. It localises to the cytoplasm. Functionally, binds to CDK2-bound cyclins and inhibits the kinase activity of CDK2; binding to cyclins is critical for its function as CDK inhibitor. Inhibits cell growth and proliferation and may play a role in cell cycle control. Required for ING5-mediated regulation of S-phase progression, enhancement of Fas-induced apoptosis and inhibition of cell growth. This is Protein INCA1 (Inca1) from Mus musculus (Mouse).